Here is a 675-residue protein sequence, read N- to C-terminus: PTS system glucose-specific EIICBA component (675 aa).

The PTS EIIC type-1 domain occupies 3 to 414; that stretch reads KKFFGQLQRI…FNFKTPGRED (412 aa). Transmembrane regions (helical) follow at residues 16–36, 63–83, 89–109, 126–146, 170–190, 199–219, 273–293, 303–323, 329–349, 355–375, and 383–403; these read LMLPVAILPAAGLLLALGNAF, AGGIIFDNLAIIFALGVAIGL, VAAIAAFVGFIVLNKTMGMFL, VLGIPTLQTGVFGGIIIGALA, FVPIMMATCSFILAFPMAIIW, AFSEGLLASNTGLAVFLFGFI, FMQGEFPVMMFGLPAAALAIY, VVAGLMLSGALTSFLTGITEP, LFVAPLLFFIHAVLDGLSFLI, LHLGYTFSGGFIDFFLLGILP, and VIPVGLVYAAIYYIIFRFLIV. The region spanning 425–506 is the PTS EIIB type-1 domain; it reads SELPFKVLDA…QQIMDGKITS (82 aa). The active-site Phosphocysteine intermediate; for EIIB activity is the C447. The PTS EIIA type-1 domain maps to 547–651; it reads DKVFSEKMMG…STITPIVVTN (105 aa). H599 serves as the catalytic Tele-phosphohistidine intermediate; for EIIA activity.

It is found in the cell membrane. The enzyme catalyses N(pros)-phospho-L-histidyl-[protein] + D-glucose(out) = D-glucose 6-phosphate(in) + L-histidyl-[protein]. Its activity is regulated as follows. Inhibited by 2-deoxyglucose and methyl beta-D-glucoside, but not by methyl alpha-D-glucoside, p-nitrophenyl alpha-D-glucoside, o-nitrophenyl beta-D-glucoside and salicin. Functionally, the phosphoenolpyruvate-dependent sugar phosphotransferase system (sugar PTS), a major carbohydrate active transport system, catalyzes the phosphorylation of incoming sugar substrates concomitantly with their translocation across the cell membrane. This system is involved in glucose transport. Cannot transport galactose, fructose, mannose, cellobiose, sucrose, maltose, lactose, melibiose and trehalose, as well as N-acetylglucosamine. This Staphylococcus carnosus (strain TM300) protein is PTS system glucose-specific EIICBA component (ptsG).